The chain runs to 150 residues: D-aminoacyl-tRNA deacylase (150 aa).

Residues 138–139 (GP) carry the Gly-cisPro motif, important for rejection of L-amino acids motif.

This sequence belongs to the DTD family. Homodimer.

The protein resides in the cytoplasm. The enzyme catalyses glycyl-tRNA(Ala) + H2O = tRNA(Ala) + glycine + H(+). It carries out the reaction a D-aminoacyl-tRNA + H2O = a tRNA + a D-alpha-amino acid + H(+). In terms of biological role, an aminoacyl-tRNA editing enzyme that deacylates mischarged D-aminoacyl-tRNAs. Also deacylates mischarged glycyl-tRNA(Ala), protecting cells against glycine mischarging by AlaRS. Acts via tRNA-based rather than protein-based catalysis; rejects L-amino acids rather than detecting D-amino acids in the active site. By recycling D-aminoacyl-tRNA to D-amino acids and free tRNA molecules, this enzyme counteracts the toxicity associated with the formation of D-aminoacyl-tRNA entities in vivo and helps enforce protein L-homochirality. In Natranaerobius thermophilus (strain ATCC BAA-1301 / DSM 18059 / JW/NM-WN-LF), this protein is D-aminoacyl-tRNA deacylase.